The primary structure comprises 344 residues: Thioredoxin reductase FGSG_00043 (344 aa).

Residues 12 to 15 (GGPA), 34 to 39 (DSVSYR), His-51, and Ala-121 each bind FAD. An intrachain disulfide couples Cys-165 to Cys-168. FAD is bound by residues Asp-314 and 321–322 (FV).

The protein belongs to the class-II pyridine nucleotide-disulfide oxidoreductase family. As to quaternary structure, homodimer. FAD serves as cofactor.

The protein operates within mycotoxin biosynthesis. Its function is as follows. Thioredoxin reductase; part of the gene cluster that mediates the biosynthesis of gramillins A and B, bicyclic lipopeptides that induce cell death in maize leaves but not in wheat leaves. The nonribosomal peptide synthetase GRA1 incorporates respectively a glutamic adic (Glu), a leucine (Leu), a serine (Ser), a hydroxyglutamine (HOGln), a 2-amino decanoic acid, and 2 cysteins (CysB and CysA). The biosynthesis of 2-amino decanoic acid incorporated in gramillins could be initiated by a fatty acid synthase composed of the alpha and beta subunits FGSG_00036 and FGSG_11656. The cytochrome P450 monooxygenase FGSG_15680 could hydroxylate the fatty acid chain. Subsequent oxidation to the ketone by the oxidoreductase FGSG_00048 and transamination by aminotransferase FGSG_00049 could form 2-amino-decanoic acid. On the other hand, FGSG_15680 could also be responsible for the HO-modified glutamine at the gamma-position. Whether hydroxylation occurs on the fully assembled product or on the Gln residue prior to assembly into the gramillins requires further proof. The thioredoxin FGSG_00043 could also be required for the disulfide-bond formation between CysA and CysB. The specific involvement of the remaining proteins from the cluster is more difficult to discern, but could have broader regulatory (FGSG_00040 and FGSG_11657) or enzymatic functions (FGSG_00044 and FGSG_00045). The final C-domain of GRA1 does not possess the expected sequence of a termination CT domain, often implicated in macrocyclization and release of a cyclopeptidein fungal NRPs; and the thioesterase FGSG_00047 may act in concert with the terminal C-domain of GRA1 to catalyze the formation of the macrocyclic anhydride and release of the products. The chain is Thioredoxin reductase FGSG_00043 from Gibberella zeae (strain ATCC MYA-4620 / CBS 123657 / FGSC 9075 / NRRL 31084 / PH-1) (Wheat head blight fungus).